A 478-amino-acid chain; its full sequence is Glutamine synthetase (478 aa).

Lysine 14 is covalently cross-linked (Isoglutamyl lysine isopeptide (Lys-Gln) (interchain with Q-Cter in protein Pup)). The GS beta-grasp domain occupies 16–100; the sequence is ENVEYVDIRF…MNFFVHDPFT (85 aa). One can recognise a GS catalytic domain in the interval 108–478; it reads PRNVARKAEN…PYEFSLYYDV (371 aa). Residues glutamate 133 and glutamate 135 each coordinate Mg(2+). ATP is bound at residue glutamate 214. Mg(2+) contacts are provided by glutamate 219 and glutamate 227. Residue 230–232 participates in ATP binding; the sequence is YKF. Residues 271–272 and glycine 272 contribute to the L-glutamate site; that span reads NG. Histidine 276 contributes to the Mg(2+) binding site. Residues 278–280 and serine 280 each bind ATP; that span reads HQS. The L-glutamate site is built by arginine 329, glutamate 335, and arginine 347. ATP is bound by residues arginine 347, arginine 352, and lysine 361. Glutamate 366 contacts Mg(2+). Arginine 368 is a binding site for L-glutamate. An O-AMP-tyrosine modification is found at tyrosine 406.

It belongs to the glutamine synthetase family. Oligomer of 12 subunits arranged in the form of two hexagons. Mg(2+) serves as cofactor.

The protein resides in the cytoplasm. The catalysed reaction is L-glutamate + NH4(+) + ATP = L-glutamine + ADP + phosphate + H(+). With respect to regulation, when cellular nitrogen levels are high, the C-terminal adenylyl transferase (AT) of GlnE inhibits GlnA by covalent transfer of an adenylyl group from ATP to Tyr-406. Conversely, when nitrogen levels are low, the N-terminal adenylyl removase (AR) of GlnE activates GlnA by removing the adenylyl group by phosphorolysis. The fully adenylated enzyme complex is inactive. Functionally, involved in nitrogen metabolism via ammonium assimilation. Catalyzes the ATP-dependent biosynthesis of glutamine from glutamate and ammonia. This is Glutamine synthetase from Mycolicibacterium smegmatis (strain ATCC 700084 / mc(2)155) (Mycobacterium smegmatis).